The primary structure comprises 179 residues: Cell division protein SepF (179 aa).

The tract at residues 22–53 is disordered; the sequence is LPYEKRDEPVFTPVNSSQEPALPMNQPSQSVG. Positions 34–53 are enriched in polar residues; sequence PVNSSQEPALPMNQPSQSVG.

Belongs to the SepF family. In terms of assembly, homodimer. Interacts with FtsZ.

The protein resides in the cytoplasm. In terms of biological role, cell division protein that is part of the divisome complex and is recruited early to the Z-ring. Probably stimulates Z-ring formation, perhaps through the cross-linking of FtsZ protofilaments. Its function overlaps with FtsA. In Streptococcus pneumoniae (strain P1031), this protein is Cell division protein SepF.